Reading from the N-terminus, the 342-residue chain is Methylthioribose-1-phosphate isomerase (342 aa).

Substrate is bound by residues 49 to 51 (RGA), R86, and Q187. The active-site Proton donor is D228. Substrate is bound at residue 238-239 (NK).

This sequence belongs to the eIF-2B alpha/beta/delta subunits family. MtnA subfamily.

It catalyses the reaction 5-(methylsulfanyl)-alpha-D-ribose 1-phosphate = 5-(methylsulfanyl)-D-ribulose 1-phosphate. It participates in amino-acid biosynthesis; L-methionine biosynthesis via salvage pathway; L-methionine from S-methyl-5-thio-alpha-D-ribose 1-phosphate: step 1/6. Catalyzes the interconversion of methylthioribose-1-phosphate (MTR-1-P) into methylthioribulose-1-phosphate (MTRu-1-P). The sequence is that of Methylthioribose-1-phosphate isomerase from Serratia proteamaculans (strain 568).